The chain runs to 303 residues: Putative S-adenosyl-L-methionine-dependent methyltransferase MAB_0213c (303 aa).

Residues Asp126 and 155-156 contribute to the S-adenosyl-L-methionine site; that span reads DL.

Belongs to the UPF0677 family.

Functionally, exhibits S-adenosyl-L-methionine-dependent methyltransferase activity. The protein is Putative S-adenosyl-L-methionine-dependent methyltransferase MAB_0213c of Mycobacteroides abscessus (strain ATCC 19977 / DSM 44196 / CCUG 20993 / CIP 104536 / JCM 13569 / NCTC 13031 / TMC 1543 / L948) (Mycobacterium abscessus).